Here is a 219-residue protein sequence, read N- to C-terminus: Phosphatidylinositol phosphate synthase (219 aa).

29 to 32 (NQLT) is a binding site for a CDP-1,2-diacyl-sn-glycerol. 2 consecutive transmembrane segments (helical) span residues 31 to 47 (LTLVSAGLTVGVALLLI) and 53 to 72 (IWAAVLTGLFAAFDMIDGTV). Asp66 and Asp69 together coordinate Mg(2+). Positions 70, 74, and 80 each coordinate a CDP-1,2-diacyl-sn-glycerol. Residues Asp87 and Asp91 each coordinate Mg(2+). Asp91 (proton acceptor) is an active-site residue. Helical transmembrane passes span 93–110 (ITDGALFGAITWWLVYSY), 116–133 (LVAASLVCLVASQVISYV), 154–171 (RLIVSLVGLGLTGMGVPY), and 177–194 (LWALAAGSIYTVVQRLVM).

This sequence belongs to the CDP-alcohol phosphatidyltransferase class-I family. As to quaternary structure, homodimer. The cofactor is Mg(2+).

The protein resides in the cell membrane. The enzyme catalyses a CDP-1,2-diacyl-sn-glycerol + 1D-myo-inositol 3-phosphate = a 1,2-diacyl-sn-glycero-3-phospho-(1D-myo-inositol-3-phosphate) + CMP + H(+). It carries out the reaction 1,2-di-(9Z-octadecenoyl)-sn-glycero-3-cytidine-5'-diphosphate + 1D-myo-inositol 3-phosphate = 1,2-di-(9Z-octadecenoyl)-sn-glycero-3-phospho-(1D-myo-inositol-3-phosphate) + CMP + H(+). It functions in the pathway phospholipid metabolism; phosphatidylinositol phosphate biosynthesis. In terms of biological role, catalyzes the conjugation of the 1'-hydroxyl group of D-myo-inositol-3-phosphate (also named L-myo-inositol-1-phosphate) with a lipid tail of cytidine diphosphate diacylglycerol (CDP-DAG), forming phosphatidylinositol phosphate (PIP) and CMP. PIP is a precursor of phosphatidylinositol (PI) which is an essential lipid required for cell wall formation. The polypeptide is Phosphatidylinositol phosphate synthase (Corynebacterium glutamicum (strain ATCC 13032 / DSM 20300 / JCM 1318 / BCRC 11384 / CCUG 27702 / LMG 3730 / NBRC 12168 / NCIMB 10025 / NRRL B-2784 / 534)).